The primary structure comprises 138 residues: MRTLWIMAVLLVGVEGSLLEFGRMIKEETGKNPLFSYISYGCYCGWGGQGQPKDATDRCCFVHDCCYGKLWSCSPKTDIYFYYRKNGAIVCARGTWCEKQICECDKAAAICFRENLGTYKDEYQSYGKSRCTEKSLKC.

The first 16 residues, 1 to 16 (MRTLWIMAVLLVGVEG), serve as a signal peptide directing secretion. 7 disulfide bridges follow: C42-C131, C44-C60, C59-C111, C65-C138, C66-C104, C73-C97, and C91-C102. Residues Y43, G45, and G47 each contribute to the Ca(2+) site. The active site involves H63. D64 contributes to the Ca(2+) binding site. Residue D105 is part of the active site.

In terms of assembly, monomer. The cofactor is Ca(2+). As to expression, expressed by the venom gland.

Its subcellular location is the secreted. The catalysed reaction is a 1,2-diacyl-sn-glycero-3-phosphocholine + H2O = a 1-acyl-sn-glycero-3-phosphocholine + a fatty acid + H(+). Its function is as follows. Snake venom phospholipase A2 (PLA2) that impairs hemostasis. It weakly inhibits ADP-induced platelet aggregation when tested on platelet rich plasma from human and rabbit blood (15-25% of inhibition at 5-10 ug of enzyme), and dose-dependently inhibits blood coagulation, possibly by inhibiting thrombin activation. Exhibits strong hydrolytic activities toward L-dipalmitoyl phosphatidylcholine. PLA2 catalyzes the calcium-dependent hydrolysis of the 2-acyl groups in 3-sn-phosphoglycerides. The chain is Basic phospholipase A2 Tbo-G6D49 from Craspedocephalus borneensis (Borneo pit viper).